The chain runs to 399 residues: Exodeoxyribonuclease 7 large subunit (399 aa).

It belongs to the XseA family. In terms of assembly, heterooligomer composed of large and small subunits.

It is found in the cytoplasm. The enzyme catalyses Exonucleolytic cleavage in either 5'- to 3'- or 3'- to 5'-direction to yield nucleoside 5'-phosphates.. Its function is as follows. Bidirectionally degrades single-stranded DNA into large acid-insoluble oligonucleotides, which are then degraded further into small acid-soluble oligonucleotides. In Clostridium beijerinckii (strain ATCC 51743 / NCIMB 8052) (Clostridium acetobutylicum), this protein is Exodeoxyribonuclease 7 large subunit.